A 211-amino-acid chain; its full sequence is LexA repressor (211 aa).

A DNA-binding region (H-T-H motif) is located at residues 27–47 (QTEIARAFGFKGVRAVQHHLD). Active-site for autocatalytic cleavage activity residues include S131 and K168.

Belongs to the peptidase S24 family. Homodimer.

The catalysed reaction is Hydrolysis of Ala-|-Gly bond in repressor LexA.. In terms of biological role, represses a number of genes involved in the response to DNA damage (SOS response), including recA and lexA. In the presence of single-stranded DNA, RecA interacts with LexA causing an autocatalytic cleavage which disrupts the DNA-binding part of LexA, leading to derepression of the SOS regulon and eventually DNA repair. In Xylella fastidiosa (strain M23), this protein is LexA repressor.